We begin with the raw amino-acid sequence, 267 residues long: Auxin-responsive protein IAA18 (267 aa).

The short motif at 42–46 (LELKL) is the EAR-like (transcriptional repression) element. Residues 81 to 101 (PSSTKTTSHKRTAPGPVVGWP) are disordered. The 100-residue stretch at 149–248 (GMFVKINMYG…SVKRLRVIKT (100 aa)) folds into the PB1 domain.

Belongs to the Aux/IAA family. In terms of assembly, homodimers and heterodimers. Interacts with TPL.

The protein resides in the nucleus. Its function is as follows. Aux/IAA proteins are short-lived transcriptional factors that function as repressors of early auxin response genes at low auxin concentrations. Repression is thought to result from the interaction with auxin response factors (ARFs), proteins that bind to the auxin-responsive promoter element (AuxRE). Formation of heterodimers with ARF proteins may alter their ability to modulate early auxin response genes expression. The sequence is that of Auxin-responsive protein IAA18 (IAA18) from Arabidopsis thaliana (Mouse-ear cress).